A 284-amino-acid polypeptide reads, in one-letter code: MKIVLISGLSGSGKSVALRQMEDSGYFCVDNLPLEMLPALVSYHIERADETELAVSVDVRSGIDIGQAREQIAYLRGLGHRVEVLFVEAEESVLVRRFSETRRGHPLSNQDMTLLESLKKEREWLFPLKEIAYCIDTSKMNAQQLRHAVRQWLKVERTGLLVILESFGFKYGVPNNADFMFDMRSLPNPYYDPELRPYTGMDKPVWDYLDGQPLVQEMVDDIEKFLTHWLPRLEDESRSYVTVAIGCTGGQHRSVYVVEKLARRLKGRYELLIRHRQAQNLPSR.

Residue 8-15 (GLSGSGKS) coordinates ATP. 58–61 (DVRS) is a GTP binding site.

It belongs to the RapZ-like family.

Functionally, displays ATPase and GTPase activities. The sequence is that of Nucleotide-binding protein NMCC_0698 from Neisseria meningitidis serogroup C (strain 053442).